The sequence spans 129 residues: UPF0325 protein Ent638_0703 (129 aa).

This sequence belongs to the UPF0325 family.

The sequence is that of UPF0325 protein Ent638_0703 from Enterobacter sp. (strain 638).